Reading from the N-terminus, the 332-residue chain is tRNA-dihydrouridine synthase B (332 aa).

Residues 16 to 18 (PMA) and Gln70 each bind FMN. The Proton donor role is filled by Cys100. FMN is bound by residues Lys139, 200 to 202 (NGD), and 224 to 225 (GR).

The protein belongs to the Dus family. DusB subfamily. FMN is required as a cofactor.

The enzyme catalyses a 5,6-dihydrouridine in tRNA + NAD(+) = a uridine in tRNA + NADH + H(+). It carries out the reaction a 5,6-dihydrouridine in tRNA + NADP(+) = a uridine in tRNA + NADPH + H(+). In terms of biological role, catalyzes the synthesis of 5,6-dihydrouridine (D), a modified base found in the D-loop of most tRNAs, via the reduction of the C5-C6 double bond in target uridines. In Xanthomonas campestris pv. campestris (strain ATCC 33913 / DSM 3586 / NCPPB 528 / LMG 568 / P 25), this protein is tRNA-dihydrouridine synthase B.